The following is an 803-amino-acid chain: MutS protein homolog 4 (803 aa).

557–564 contributes to the ATP binding site; that stretch reads GANMSGKS.

This sequence belongs to the DNA mismatch repair MutS family. In terms of assembly, heterooligomer of MSH4 and MSH5.

In terms of biological role, involved in meiotic recombination. Facilitate crossovers between homologs during meiosis. The sequence is that of MutS protein homolog 4 (MSH4) from Candida albicans (Yeast).